Reading from the N-terminus, the 277-residue chain is Phosphoenolpyruvate synthase regulatory protein (277 aa).

157 to 164 (GVSRCGKT) lines the ADP pocket.

It belongs to the pyruvate, phosphate/water dikinase regulatory protein family. PSRP subfamily.

The enzyme catalyses [pyruvate, water dikinase] + ADP = [pyruvate, water dikinase]-phosphate + AMP + H(+). The catalysed reaction is [pyruvate, water dikinase]-phosphate + phosphate + H(+) = [pyruvate, water dikinase] + diphosphate. Functionally, bifunctional serine/threonine kinase and phosphorylase involved in the regulation of the phosphoenolpyruvate synthase (PEPS) by catalyzing its phosphorylation/dephosphorylation. In Shigella boydii serotype 4 (strain Sb227), this protein is Phosphoenolpyruvate synthase regulatory protein.